A 407-amino-acid polypeptide reads, in one-letter code: Peptidase T (407 aa).

His-82 is a binding site for Zn(2+). Residue Asp-84 is part of the active site. Asp-143 contacts Zn(2+). Glu-177 acts as the Proton acceptor in catalysis. The Zn(2+) site is built by Glu-178, Asp-200, and His-382.

It belongs to the peptidase M20B family. Zn(2+) serves as cofactor.

Its subcellular location is the cytoplasm. It catalyses the reaction Release of the N-terminal residue from a tripeptide.. Cleaves the N-terminal amino acid of tripeptides. The chain is Peptidase T from Streptococcus pyogenes serotype M3 (strain ATCC BAA-595 / MGAS315).